A 227-amino-acid chain; its full sequence is N-acetyltransferase 8 (227 aa).

Residues 1 to 35 lie on the Cytoplasmic side of the membrane; the sequence is MASFRIRQFQERDYKQVVDVFSRGMEEHIPTAFRH. A helical; Signal-anchor for type II membrane protein membrane pass occupies residues 36–56; that stretch reads LLTLPRTLLLLAVVPLAIVLV. Over 57-227 the chain is Lumenal; the sequence is SGSWFLAVVC…PLPSAQKYEL (171 aa). The region spanning 69–217 is the N-acetyltransferase domain; the sequence is FLFLFLWFLA…VDVSLIHFIY (149 aa).

This sequence belongs to the NAT8 family. Expressed in brain (at protein level).

The protein resides in the endoplasmic reticulum-Golgi intermediate compartment membrane. It is found in the endoplasmic reticulum membrane. It catalyses the reaction L-lysyl-[protein] + acetyl-CoA = N(6)-acetyl-L-lysyl-[protein] + CoA + H(+). The catalysed reaction is an S-substituted L-cysteine + acetyl-CoA = an N-acetyl-L-cysteine-S-conjugate + CoA + H(+). The protein operates within sulfur metabolism; glutathione metabolism. Its function is as follows. Endoplasmic reticulum (ER)-membrane-bound lysine N-acetyltransferase catalyzing the N6-acetylation of lysine residues in the lumen of the ER in various proteins, including PROM1 and BACE1, using acetyl-CoA as acetyl donor. Thereby, may regulate apoptosis through the acetylation and the regulation of the expression of PROM1. May also regulate amyloid beta-peptide secretion through acetylation of BACE1 and the regulation of its expression in neurons. N(6)-lysine acetylation in the ER maintains protein homeostasis and regulates reticulophagy. Alternatively, acetylates the free alpha-amino group of cysteine S-conjugates to form mercapturic acids. This is the final step in a major route for detoxification of a wide variety of reactive electrophiles which starts with their incorporation into glutathione S-conjugates. The glutathione S-conjugates are then further processed into cysteine S-conjugates and finally mercapturic acids which are water soluble and can be readily excreted in urine or bile. The protein is N-acetyltransferase 8 (Nat8) of Mus musculus (Mouse).